Consider the following 338-residue polypeptide: Anthranilate phosphoribosyltransferase (338 aa).

5-phospho-alpha-D-ribose 1-diphosphate is bound by residues glycine 81, 84–85 (GD), threonine 89, 91–94 (NIST), 109–117 (KHGNRALSS), and alanine 121. Residue glycine 81 coordinates anthranilate. Serine 93 provides a ligand contact to Mg(2+). Residue asparagine 112 coordinates anthranilate. Arginine 167 lines the anthranilate pocket. Aspartate 225 and glutamate 226 together coordinate Mg(2+).

This sequence belongs to the anthranilate phosphoribosyltransferase family. As to quaternary structure, homodimer. Requires Mg(2+) as cofactor.

It catalyses the reaction N-(5-phospho-beta-D-ribosyl)anthranilate + diphosphate = 5-phospho-alpha-D-ribose 1-diphosphate + anthranilate. It functions in the pathway amino-acid biosynthesis; L-tryptophan biosynthesis; L-tryptophan from chorismate: step 2/5. Its function is as follows. Catalyzes the transfer of the phosphoribosyl group of 5-phosphorylribose-1-pyrophosphate (PRPP) to anthranilate to yield N-(5'-phosphoribosyl)-anthranilate (PRA). The chain is Anthranilate phosphoribosyltransferase from Rhizobium etli (strain ATCC 51251 / DSM 11541 / JCM 21823 / NBRC 15573 / CFN 42).